The sequence spans 893 residues: Alanine--tRNA ligase (893 aa).

Positions 575, 579, 677, and 681 each coordinate Zn(2+).

It belongs to the class-II aminoacyl-tRNA synthetase family. Zn(2+) serves as cofactor.

It localises to the cytoplasm. It carries out the reaction tRNA(Ala) + L-alanine + ATP = L-alanyl-tRNA(Ala) + AMP + diphosphate. Catalyzes the attachment of alanine to tRNA(Ala) in a two-step reaction: alanine is first activated by ATP to form Ala-AMP and then transferred to the acceptor end of tRNA(Ala). Also edits incorrectly charged Ser-tRNA(Ala) and Gly-tRNA(Ala) via its editing domain. The sequence is that of Alanine--tRNA ligase from Synechococcus sp. (strain CC9311).